We begin with the raw amino-acid sequence, 519 residues long: Laccase-2 (519 aa).

The N-terminal stretch at 1–20 (MGLQRFSFFVTLALVARSLA) is a signal peptide. Plastocyanin-like domains follow at residues 22-147 (IGPV…FVVY) and 159-301 (VDNE…ILRY). A glycan (N-linked (GlcNAc...) asparagine) is linked at Asn-74. 4 residues coordinate Cu cation: His-84, His-86, His-129, and His-131. Disulfide bonds link Cys-105–Cys-508 and Cys-137–Cys-225. N-linked (GlcNAc...) asparagine glycosylation is found at Asn-161, Asn-228, Asn-237, Asn-271, Asn-353, and Asn-361. In terms of domain architecture, Plastocyanin-like 3 spans 368 to 490 (TVPVLLQILS…AGFAIVFAED (123 aa)). Positions 415, 418, 420, 472, 473, 474, and 478 each coordinate Cu cation.

The protein belongs to the multicopper oxidase family. As to quaternary structure, homodimer. The cofactor is Cu cation.

Its subcellular location is the secreted. The catalysed reaction is 4 hydroquinone + O2 = 4 benzosemiquinone + 2 H2O. Lignin degradation and detoxification of lignin-derived products. The polypeptide is Laccase-2 (Trametes villosa (White-rot fungus)).